We begin with the raw amino-acid sequence, 328 residues long: Nickel import system permease protein NikB (328 aa).

The next 6 membrane-spanning stretches (helical) occupy residues 11–31, 104–124, 139–159, 170–190, 229–249, and 279–299; these read LMQMIVVLFVISTLTFILMKL, LLISFSTLVVSLCISIPLGII, VISTLSISLPAFFIGIILLFI, ILSQFILPVITLSLGMCAYII, ILPIIPLLGISLGSLIGGTVV, and VLFIGFFVVIINTIADLLTLL. One can recognise an ABC transmembrane type-1 domain in the interval 100 to 297; the sequence is APITLLISFS…IINTIADLLT (198 aa).

Belongs to the binding-protein-dependent transport system permease family. OppBC subfamily. In terms of assembly, the complex is composed of two ATP-binding proteins (NikD and NikE), two transmembrane proteins (NikB and NikC) and a solute-binding protein (NikA).

The protein resides in the cell membrane. Part of the ABC transporter complex NikABCDE (Opp2) involved in nickel import. Probably responsible for the translocation of the substrate across the membrane. This chain is Nickel import system permease protein NikB, found in Staphylococcus aureus (strain MSSA476).